Reading from the N-terminus, the 466-residue chain is Cysteine--tRNA ligase (466 aa).

Residue Cys-28 coordinates Zn(2+). The 'HIGH' region motif lies at 30–40 (PTVYNYIHIGN). Zn(2+) contacts are provided by Cys-208, His-233, and Glu-237. The short motif at 265 to 269 (KMSKS) is the 'KMSKS' region element. Lys-268 is an ATP binding site.

This sequence belongs to the class-I aminoacyl-tRNA synthetase family. Monomer. The cofactor is Zn(2+).

The protein resides in the cytoplasm. The enzyme catalyses tRNA(Cys) + L-cysteine + ATP = L-cysteinyl-tRNA(Cys) + AMP + diphosphate. This chain is Cysteine--tRNA ligase, found in Staphylococcus epidermidis (strain ATCC 35984 / DSM 28319 / BCRC 17069 / CCUG 31568 / BM 3577 / RP62A).